Reading from the N-terminus, the 380-residue chain is 1-deoxy-D-xylulose 5-phosphate reductoisomerase (380 aa).

The NADPH site is built by Thr-10, Gly-11, Ser-12, Ile-13, Gly-36, Arg-37, Asn-38, and Asn-120. Lys-121 contributes to the 1-deoxy-D-xylulose 5-phosphate binding site. Glu-122 is an NADPH binding site. Asp-146 serves as a coordination point for Mn(2+). Ser-147, Glu-148, Ser-172, and His-195 together coordinate 1-deoxy-D-xylulose 5-phosphate. Glu-148 lines the Mn(2+) pocket. NADPH is bound at residue Gly-201. Ser-208, Asn-213, Lys-214, and Glu-217 together coordinate 1-deoxy-D-xylulose 5-phosphate. Glu-217 contributes to the Mn(2+) binding site.

Belongs to the DXR family. Requires Mg(2+) as cofactor. The cofactor is Mn(2+).

The enzyme catalyses 2-C-methyl-D-erythritol 4-phosphate + NADP(+) = 1-deoxy-D-xylulose 5-phosphate + NADPH + H(+). It participates in isoprenoid biosynthesis; isopentenyl diphosphate biosynthesis via DXP pathway; isopentenyl diphosphate from 1-deoxy-D-xylulose 5-phosphate: step 1/6. In terms of biological role, catalyzes the NADPH-dependent rearrangement and reduction of 1-deoxy-D-xylulose-5-phosphate (DXP) to 2-C-methyl-D-erythritol 4-phosphate (MEP). This Listeria monocytogenes serovar 1/2a (strain ATCC BAA-679 / EGD-e) protein is 1-deoxy-D-xylulose 5-phosphate reductoisomerase.